We begin with the raw amino-acid sequence, 466 residues long: MAQTLYDKLWQSHVVDTGDDGTTVLYIDRHLLHEVTSPQAFEGLKLAGRRPWRVSANLMVADHNVPTTDRSEGIADPTSRLQVETLDHNAHEYGLTYFSMRDKRQGIVHVIGPEQGATLPGMTVVCGDSHTSTHGAFGALAHGIGTSEVEHVLATQTLLAQKSKAMLVQVDGALPVGVTAKDIVLAIIGKIGTAGGTGYAIEFAGSTIRSLSMEGRMTICNMAIEAGARAGMVAVDETTINYVKGRPLSPVGPHWDRAVEYWRTLHSDVGAKFDLVVTLNAAEVKPQVSWGTSPEMVVSVDGRVPDPDKEKDATKRDGMEKALVYMGLKPNTPITDIRIDKVFIGSCTNSRIQDLRAAAAVVRGKHRASNVKLAMVVPGSGLVKEQAEREGLDKIFKDAGFEWREPGCSMCLAMNADRLEPGERCASTSNRNFEGRQGAGGRTHLVSPAMAAAAGIEGHFVDVRAL.

Positions 347, 408, and 411 each coordinate [4Fe-4S] cluster.

It belongs to the aconitase/IPM isomerase family. LeuC type 1 subfamily. Heterodimer of LeuC and LeuD. [4Fe-4S] cluster serves as cofactor.

It carries out the reaction (2R,3S)-3-isopropylmalate = (2S)-2-isopropylmalate. Its pathway is amino-acid biosynthesis; L-leucine biosynthesis; L-leucine from 3-methyl-2-oxobutanoate: step 2/4. Functionally, catalyzes the isomerization between 2-isopropylmalate and 3-isopropylmalate, via the formation of 2-isopropylmaleate. The sequence is that of 3-isopropylmalate dehydratase large subunit from Herminiimonas arsenicoxydans.